Consider the following 474-residue polypeptide: Glutamyl-tRNA(Gln) amidotransferase subunit A (474 aa).

Residues K76 and S151 each act as charge relay system in the active site. S175 functions as the Acyl-ester intermediate in the catalytic mechanism.

It belongs to the amidase family. GatA subfamily. As to quaternary structure, heterotrimer of A, B and C subunits.

It catalyses the reaction L-glutamyl-tRNA(Gln) + L-glutamine + ATP + H2O = L-glutaminyl-tRNA(Gln) + L-glutamate + ADP + phosphate + H(+). Its function is as follows. Allows the formation of correctly charged Gln-tRNA(Gln) through the transamidation of misacylated Glu-tRNA(Gln) in organisms which lack glutaminyl-tRNA synthetase. The reaction takes place in the presence of glutamine and ATP through an activated gamma-phospho-Glu-tRNA(Gln). The protein is Glutamyl-tRNA(Gln) amidotransferase subunit A of Chlorobium chlorochromatii (strain CaD3).